Here is a 398-residue protein sequence, read N- to C-terminus: Dual-specificity RNA methyltransferase RlmN (398 aa).

Glu-119 serves as the catalytic Proton acceptor. The Radical SAM core domain occupies 125-364 (EADRATLCVS…TIVRKTRGDD (240 aa)). A disulfide bond links Cys-132 and Cys-369. Residues Cys-139, Cys-143, and Cys-146 each contribute to the [4Fe-4S] cluster site. S-adenosyl-L-methionine-binding positions include 193-194 (GE), Ser-225, 247-249 (SLH), and Asn-326. Cys-369 acts as the S-methylcysteine intermediate in catalysis.

Belongs to the radical SAM superfamily. RlmN family. [4Fe-4S] cluster is required as a cofactor.

It is found in the cytoplasm. It catalyses the reaction adenosine(2503) in 23S rRNA + 2 reduced [2Fe-2S]-[ferredoxin] + 2 S-adenosyl-L-methionine = 2-methyladenosine(2503) in 23S rRNA + 5'-deoxyadenosine + L-methionine + 2 oxidized [2Fe-2S]-[ferredoxin] + S-adenosyl-L-homocysteine. The enzyme catalyses adenosine(37) in tRNA + 2 reduced [2Fe-2S]-[ferredoxin] + 2 S-adenosyl-L-methionine = 2-methyladenosine(37) in tRNA + 5'-deoxyadenosine + L-methionine + 2 oxidized [2Fe-2S]-[ferredoxin] + S-adenosyl-L-homocysteine. In terms of biological role, specifically methylates position 2 of adenine 2503 in 23S rRNA and position 2 of adenine 37 in tRNAs. m2A2503 modification seems to play a crucial role in the proofreading step occurring at the peptidyl transferase center and thus would serve to optimize ribosomal fidelity. This chain is Dual-specificity RNA methyltransferase RlmN, found in Yersinia pseudotuberculosis serotype IB (strain PB1/+).